A 340-amino-acid chain; its full sequence is tRNA N6-adenosine threonylcarbamoyltransferase (340 aa).

Fe cation contacts are provided by His111 and His115. Substrate-binding positions include 134-138 (LVSGG), Asp167, Gly180, and Asn276. Position 304 (Asp304) interacts with Fe cation.

It belongs to the KAE1 / TsaD family. It depends on Fe(2+) as a cofactor.

It is found in the cytoplasm. It catalyses the reaction L-threonylcarbamoyladenylate + adenosine(37) in tRNA = N(6)-L-threonylcarbamoyladenosine(37) in tRNA + AMP + H(+). Required for the formation of a threonylcarbamoyl group on adenosine at position 37 (t(6)A37) in tRNAs that read codons beginning with adenine. Is involved in the transfer of the threonylcarbamoyl moiety of threonylcarbamoyl-AMP (TC-AMP) to the N6 group of A37, together with TsaE and TsaB. TsaD likely plays a direct catalytic role in this reaction. This is tRNA N6-adenosine threonylcarbamoyltransferase from Helicobacter pylori (strain ATCC 700392 / 26695) (Campylobacter pylori).